The chain runs to 581 residues: Prolactin receptor (581 aa).

The N-terminal stretch at 1-24 (MKENVASRAVFILLLFLNASLLNG) is a signal peptide. Residues 25 to 234 (QSPPGKPKII…QIPNDFPVND (210 aa)) lie on the Extracellular side of the membrane. Fibronectin type-III domains are found at residues 27–127 (PPGK…IVEP) and 129–229 (PPAN…IPND). C36 and C46 are joined by a disulfide. N59 carries an N-linked (GlcNAc...) asparagine glycan. An intrachain disulfide couples C75 to C86. An N-linked (GlcNAc...) asparagine glycan is attached at N132. Zn(2+) is bound by residues D211 and H212. A WSXWS motif motif is present at residues 215–219 (WSEWS). N-linked (GlcNAc...) asparagine glycosylation is present at N233. A helical transmembrane segment spans residues 235 to 258 (TTVWIFVAVLSAVICLIMVWAVAL). The Cytoplasmic portion of the chain corresponds to 259 to 581 (KGYSMMTCIL…PAKEAPPALP (323 aa)). The short motif at 267-275 (ILPPVPGPK) is the Box 1 motif element. 2 disordered regions span residues 321 to 362 (EDQQ…LFSE) and 462 to 502 (LKPS…QDKT). Residues 329-349 (PSKEHMEQGVKPMHMDPDSDS) are compositionally biased toward basic and acidic residues.

Belongs to the type I cytokine receptor family. Type 1 subfamily. Interacts with SMARCA1. Interacts with NEK3 and VAV2 and this interaction is prolactin-dependent.

It is found in the membrane. Functionally, this is a receptor for the anterior pituitary hormone prolactin. The polypeptide is Prolactin receptor (PRLR) (Cervus elaphus (Red deer)).